We begin with the raw amino-acid sequence, 152 residues long: Deoxyuridine 5'-triphosphate nucleotidohydrolase (152 aa).

Substrate is bound by residues 71–73 (RSG), asparagine 84, and 88–90 (LID).

This sequence belongs to the dUTPase family. The cofactor is Mg(2+).

It carries out the reaction dUTP + H2O = dUMP + diphosphate + H(+). It participates in pyrimidine metabolism; dUMP biosynthesis; dUMP from dCTP (dUTP route): step 2/2. Functionally, this enzyme is involved in nucleotide metabolism: it produces dUMP, the immediate precursor of thymidine nucleotides and it decreases the intracellular concentration of dUTP so that uracil cannot be incorporated into DNA. In Xanthomonas campestris pv. campestris (strain 8004), this protein is Deoxyuridine 5'-triphosphate nucleotidohydrolase.